The primary structure comprises 100 residues: Urease subunit gamma (100 aa).

The protein belongs to the urease gamma subunit family. In terms of assembly, heterotrimer of UreA (gamma), UreB (beta) and UreC (alpha) subunits. Three heterotrimers associate to form the active enzyme.

The protein localises to the cytoplasm. It carries out the reaction urea + 2 H2O + H(+) = hydrogencarbonate + 2 NH4(+). It participates in nitrogen metabolism; urea degradation; CO(2) and NH(3) from urea (urease route): step 1/1. This Frankia alni (strain DSM 45986 / CECT 9034 / ACN14a) protein is Urease subunit gamma.